A 400-amino-acid polypeptide reads, in one-letter code: Phosphoglycerate kinase (400 aa).

Substrate-binding positions include 23 to 25, arginine 38, 61 to 64, arginine 120, and arginine 153; these read DLN and HFGR. Residues lysine 203, glutamate 325, and 355-358 each bind ATP; that span reads GGDT.

The protein belongs to the phosphoglycerate kinase family. As to quaternary structure, monomer.

It localises to the cytoplasm. The catalysed reaction is (2R)-3-phosphoglycerate + ATP = (2R)-3-phospho-glyceroyl phosphate + ADP. The protein operates within carbohydrate degradation; glycolysis; pyruvate from D-glyceraldehyde 3-phosphate: step 2/5. The chain is Phosphoglycerate kinase from Methylobacterium radiotolerans (strain ATCC 27329 / DSM 1819 / JCM 2831 / NBRC 15690 / NCIMB 10815 / 0-1).